Consider the following 456-residue polypeptide: Transforming growth factor beta-1-induced transcript 1 protein (456 aa).

Met-1 is modified (N-acetylmethionine). Positions 1–79 (MEDLDALLSD…ATPPFSSSCG (79 aa)) are disordered. The transcription activation stretch occupies residues 1–195 (MEDLDALLSD…DTPSPPGPTS (195 aa)). The segment at 1–235 (MEDLDALLSD…CNKPIAGQVV (235 aa)) is interaction with PTK2B/PYK2. The short motif at 3–15 (DLDALLSDLETTT) is the LD motif 1 element. Thr-33 is subject to Phosphothreonine. Tyr-55 bears the Phosphotyrosine mark. Ser-63 carries the post-translational modification Phosphoserine. An interaction with PTK2/FAK1 region spans residues 78–131 (CGVLGTGLCELDRLLQELNATQFNITDEIMSQFPSSKETAGEQKEDQSEDKKRP). The LD motif 2 signature appears at 87–99 (ELDRLLQELNATQ). The segment at 109–146 (QFPSSKETAGEQKEDQSEDKKRPSPPPSPSPVLPKPSA) is disordered. Over residues 116–130 (TAGEQKEDQSEDKKR) the composition is skewed to basic and acidic residues. Residues Ser-132, Ser-136, Ser-138, Ser-159, Ser-181, and Ser-189 each carry the phosphoserine modification. Residues 132 to 142 (SPPPSPSPVLP) are compositionally biased toward pro residues. The LD motif 3 motif lies at 152–163 (ELDRLMASLSDF). Residues 166–200 (QNHLPASGPTPPPVPSSMSEDTPSPPGPTSKGSLD) are disordered. The short motif at 198–210 (SLDTMLGLLQSDL) is the LD motif 4 element. LIM zinc-binding domains lie at 221–280 (GLCG…RFSP), 281–338 (RCGL…QLFA), 339–398 (PRCQ…RRGS), and 399–456 (LCAT…KLFG). Ser-398 bears the Phosphoserine mark. Thr-402 is modified (phosphothreonine).

This sequence belongs to the paxillin family. As to quaternary structure, homooligomer. Interacts with CRIP2, HSPB1, ILK, LIMS1, LIMS2, NCK2, NUDT16L1, PAK, PPARG, PTPN12, TCF3, TCF7L2 and VCL. Forms a complex with GIT1 and ARHGEF7. Interacts with AR/androgen receptor in a ligand-dependent manner. Interacts with CSK, LYN, MAPK15, NR3C1, PPARG, PTK2/FAK1, PTK2B/PYK2, SLC6A3, SLC6A4, SMAD3, SRC and talin. Interacts (via LIM zinc-binding domain 2) with CBLC (via RING-type zinc finger); the interaction is direct and enhances CBLC E3 ubiquitin-protein ligase activity. Phosphorylated by gonadotropin-releasing hormone-activated SRC.

It is found in the cell junction. The protein localises to the focal adhesion. It localises to the nucleus matrix. Its subcellular location is the cytoplasm. The protein resides in the cytoskeleton. Its function is as follows. Functions as a molecular adapter coordinating multiple protein-protein interactions at the focal adhesion complex and in the nucleus. Links various intracellular signaling modules to plasma membrane receptors and regulates the Wnt and TGFB signaling pathways. May also regulate SLC6A3 and SLC6A4 targeting to the plasma membrane hence regulating their activity. In the nucleus, functions as a nuclear receptor coactivator regulating glucocorticoid, androgen, mineralocorticoid and progesterone receptor transcriptional activity. May play a role in the processes of cell growth, proliferation, migration, differentiation and senescence. May have a zinc-dependent DNA-binding activity. The polypeptide is Transforming growth factor beta-1-induced transcript 1 protein (TGFB1I1) (Bos taurus (Bovine)).